The primary structure comprises 152 residues: Putative membrane protein insertion efficiency factor (152 aa).

A disordered region spans residues 81–152 (AAGGYDPVPG…IVGSGRGPWV (72 aa)).

Belongs to the UPF0161 family.

Its subcellular location is the cell membrane. Its function is as follows. Could be involved in insertion of integral membrane proteins into the membrane. The sequence is that of Putative membrane protein insertion efficiency factor from Frankia casuarinae (strain DSM 45818 / CECT 9043 / HFP020203 / CcI3).